Reading from the N-terminus, the 338-residue chain is MSRQPILDIEGLRTVFRTRAREIVAVNDVDIVVNPGETVALVGESGSGKSVTSLSIMRLLARKVGFIDAGSIILRGKSGQTVDLAAIDEEAMRRIRGNDIGMVFQEPMTSLNPVYTIGDQIGEPLRVHRGTSRREALEAAVELLDRVGIPDARRRAGQYPHELSGGMRQRATIAMALICNPTFLIADEPTTALDVTIQAQILDLMQKLQSESGMGMLFVTHNLGVVAEIAQRVVVMYAGRIVESGPVKEVFRNPRHPYTMGLLRSMPRLGDATEMKRRGEKLNTIPGMVPGLANLPSGCAFAPRCSFAVEACHAAVPPLASVNEHHGSRCIRWQEIAA.

In terms of domain architecture, ABC transporter spans 7–263; that stretch reads LDIEGLRTVF…PRHPYTMGLL (257 aa). 43–50 lines the ATP pocket; sequence GESGSGKS.

Belongs to the ABC transporter superfamily. In terms of assembly, the complex is composed of two ATP-binding proteins (BruAb2_0796 and BruAb2_0797), two transmembrane proteins (BruAb2_0794) and a solute-binding protein (BruAb2_0792).

Its subcellular location is the cell inner membrane. In terms of biological role, probably part of an ABC transporter complex that could be involved in peptide import. Probably responsible for energy coupling to the transport system. This is Putative peptide import ATP-binding protein BruAb2_0796 from Brucella abortus biovar 1 (strain 9-941).